The following is a 252-amino-acid chain: Probable aquaporin TIP1-2 (252 aa).

The next 2 membrane-spanning stretches (helical) occupy residues 24–44 (VAEFISMLIFVFAGSGSGMAF) and 57–77 (GLIAASLAHALALFVAVAVGA). The NPA 1 motif lies at 85–87 (NPA). Helical transmembrane passes span 115–137 (VVACLLLKIATGGAAVGAFSLSA), 144–164 (AVVFEIVMTFGLVYTVYATAV), and 173–193 (VIAPIAIGFIVGANILAGGAF). Positions 199 to 201 (NPA) match the NPA 2 motif. The helical transmembrane segment at 220–240 (WLGPFVGAAIAALIYDIIFIG) threads the bilayer.

This sequence belongs to the MIP/aquaporin (TC 1.A.8) family. TIP (TC 1.A.8.10) subfamily. Expressed in leaves.

Its subcellular location is the vacuole membrane. Functionally, aquaporins facilitate the transport of water and small neutral solutes across cell membranes. May be involved in transport from the vacuolar compartment to the cytoplasm. The chain is Probable aquaporin TIP1-2 (TIP1-2) from Oryza sativa subsp. japonica (Rice).